We begin with the raw amino-acid sequence, 979 residues long: DNA ligase 4 (979 aa).

The segment at 1–39 (MDSDEIMPDEEHPNVPVGDEESDIDEKYPNRPRNHSPTL) is disordered. ATP-binding residues include Glu320, Lys322, Leu323, Arg327, Glu389, Phe430, Glu490, Lys495, Lys512, and Lys514. Lys322 serves as the catalytic N6-AMP-lysine intermediate. Glu389 contributes to the Mg(2+) binding site. Residue Glu490 coordinates Mg(2+). 2 consecutive BRCT domains span residues 721-814 (PSGH…PDFL) and 867-965 (LQES…RFQP).

It belongs to the ATP-dependent DNA ligase family. Mg(2+) is required as a cofactor.

The protein resides in the nucleus. It catalyses the reaction ATP + (deoxyribonucleotide)n-3'-hydroxyl + 5'-phospho-(deoxyribonucleotide)m = (deoxyribonucleotide)n+m + AMP + diphosphate.. Its function is as follows. DNA ligase involved in DNA non-homologous end joining (NHEJ); required for double-strand break (DSB) repair. The chain is DNA ligase 4 (lig4) from Aspergillus fumigatus (strain ATCC MYA-4609 / CBS 101355 / FGSC A1100 / Af293) (Neosartorya fumigata).